The chain runs to 626 residues: Zinc finger protein 471 (626 aa).

One can recognise a KRAB domain in the interval 14-85 (VTFKDVAIDF…TSEMTRSPFS (72 aa)). 15 C2H2-type zinc fingers span residues 206–228 (FKCNECDKTFTHSSSLTVHFRIH), 234–256 (YACEECGKAFKQRQHLAQHHRTH), 262–284 (FECKECRKAFKQSEHLIQHQRIH), 290–312 (YKCKECRKAFRQPAHLAQHQRIH), 318–340 (YECKECGKAFSDGSSFARHQRCH), 346–369 (YECIECGKAFRYNTSFIRHWRSYH), 375–397 (FNCIDCGKAFSVHIGLILHRRIH), 403–425 (YKCGVCGKTFSSGSSRTVHQRIH), 431–453 (YECDICGKDFSHHASLTQHQRVH), 459–481 (YECKECGKAFRQNVHLVSHLRIH), 487–509 (YECKECGKAFRISSQLATHQRIH), 515–537 (YECIECGNAFKQRSHLAQHQKTH), 543–565 (YECNECGKAFSQTSNLTQHQRIH), 571–593 (YKCTECGKAFSDSSSCAQHQRLH), and 599–621 (YQCFECGKAFRRKLSLICHQRSH).

This sequence belongs to the krueppel C2H2-type zinc-finger protein family.

Its subcellular location is the nucleus. Its function is as follows. May be involved in transcriptional regulation. The sequence is that of Zinc finger protein 471 (ZNF471) from Homo sapiens (Human).